A 699-amino-acid chain; its full sequence is D-(-)-3-hydroxybutyrate oligomer hydrolase (699 aa).

An N-terminal signal peptide occupies residues 1–33; sequence MTAIRGGSRRAPGLALALLGGVLLGACHGDENA. S311 functions as the Charge relay system in the catalytic mechanism.

It belongs to the D-(-)-3-hydroxybutyrate oligomer hydrolase family.

It localises to the secreted. It catalyses the reaction (3R)-hydroxybutanoate dimer + H2O = 2 (R)-3-hydroxybutanoate + H(+). The protein operates within lipid metabolism; butanoate metabolism. In terms of biological role, participates in the degradation of poly-3-hydroxybutyrate (PHB). It works downstream of poly(3-hydroxybutyrate) depolymerase, hydrolyzing D(-)-3-hydroxybutyrate oligomers of various length (3HB-oligomers) into 3HB-monomers. The polypeptide is D-(-)-3-hydroxybutyrate oligomer hydrolase (Burkholderia pseudomallei (strain 1106a)).